Consider the following 1379-residue polypeptide: Attractin-like protein 1 (1379 aa).

The tract at residues 1 to 23 (METGGRARTGTPQPAAPGVWRAR) is disordered. The N-terminal stretch at 1–52 (METGGRARTGTPQPAAPGVWRARPAGGGGGGASSWLLDGNSWLLCYGFLYLA) is a signal peptide. Residues 53-91 (LYAQVSQSKPCERTGSCFSGRCVNSTCLCDPGWVGDQCQ) enclose the EGF-like 1 domain. Residues 53 to 1230 (LYAQVSQSKP…FSQHNTIMDL (1178 aa)) lie on the Extracellular side of the membrane. Intrachain disulfides connect Cys-63–Cys-79, Cys-81–Cys-90, and Cys-93–Cys-119. An N-linked (GlcNAc...) asparagine glycan is attached at Asn-76. Positions 93–209 (CQGRFKLTEP…TGFNIFYSIN (117 aa)) constitute a CUB domain. N-linked (GlcNAc...) asparagine glycans are attached at residues Asn-174 and Asn-198. Residues 207 to 245 (SINSCPNNCSGHGKCTTSVSVPSQVYCECDKYWKGEACD) enclose the EGF-like 2 domain. Cystine bridges form between Cys-211/Cys-221, Cys-215/Cys-233, and Cys-235/Cys-244. Kelch repeat units follow at residues 316 to 365 (FMWV…LYQE), 367 to 415 (IFMY…EGHS), 427 to 475 (VMII…SVYD), 480 to 531 (SIYV…LING), 533 to 591 (MLIF…VING), and 592 to 638 (SMYI…WNKN). An N-linked (GlcNAc...) asparagine glycan is attached at Asn-380. PSI domains lie at 614 to 657 (NCKA…AKCP), 666 to 709 (RCYR…TKCH), and 715 to 760 (ICNK…DACL). Residues 755–873 (IGDACLRVNS…TSMANGLVCE (119 aa)) form the C-type lectin domain. 3 N-linked (GlcNAc...) asparagine glycosylation sites follow: Asn-763, Asn-778, and Asn-898. Residues Cys-776 and Cys-872 are joined by a disulfide bond. PSI domains are found at residues 889–939 (PCSL…ATCS) and 942–1012 (NCSG…IQCP). 8 disulfide bridges follow: Cys-1014–Cys-1022, Cys-1016–Cys-1028, Cys-1031–Cys-1040, Cys-1043–Cys-1057, Cys-1060–Cys-1069, Cys-1062–Cys-1076, Cys-1078–Cys-1088, and Cys-1091–Cys-1106. Laminin EGF-like domains follow at residues 1014–1059 (CQCN…QCTA) and 1060–1108 (CTCS…TCYY). Asn-1157 is a glycosylation site (N-linked (GlcNAc...) asparagine). The chain crosses the membrane as a helical span at residues 1231-1251 (VQFFVTFFSCFLSLLLVAAVV). The Cytoplasmic segment spans residues 1252 to 1379 (WKIKQTCWAS…HLSTRQGTCV (128 aa)). Residues 1354–1379 (KASDSKDKTSGVRNRKHLSTRQGTCV) form a disordered region.

In terms of assembly, interacts with MC4R.

The protein resides in the membrane. Functionally, may play a role in melanocortin signaling pathways that regulate energy homeostasis. This Homo sapiens (Human) protein is Attractin-like protein 1 (ATRNL1).